The chain runs to 3567 residues: Sushi, von Willebrand factor type A, EGF and pentraxin domain-containing protein 1 (3567 aa).

An N-terminal signal peptide occupies residues 1 to 17 (MWSRLAFCCWALALVSG). In terms of domain architecture, VWFA spans 84-265 (ELVFLVDESS…LARRALHEDL (182 aa)). An N-linked (GlcNAc...) asparagine glycan is attached at Asn187. Sushi domains follow at residues 377–436 (VHCP…FCRV), 437–496 (RTCP…RCVE), and 497–561 (RHCA…VCKD). Cystine bridges form between Cys379-Cys421, Cys407-Cys434, Cys439-Cys481, Cys467-Cys494, Cys499-Cys544, and Cys530-Cys559. 2 HYR domains span residues 560–644 (KDVE…KVID) and 645–724 (VEPP…VIKG). A Sushi 4 domain is found at 725–789 (SPCEVPFTPV…YSTEWPDCAI (65 aa)). 20 disulfides stabilise this stretch: Cys727–Cys769, Cys753–Cys787, Cys1196–Cys1207, Cys1201–Cys1216, Cys1218–Cys1227, Cys1234–Cys1245, Cys1239–Cys1254, Cys1256–Cys1265, Cys1272–Cys1283, Cys1277–Cys1292, Cys1294–Cys1303, Cys1310–Cys1321, Cys1315–Cys1330, Cys1332–Cys1341, Cys1348–Cys1359, Cys1353–Cys1368, Cys1370–Cys1379, Cys1386–Cys1397, Cys1391–Cys1406, and Cys1408–Cys1417. The 37-residue stretch at 1192–1228 (VFHECFLNPCHNSGTCQQLGRGYVCLCPPGYTGLKCE) folds into the EGF-like 1 domain. An EGF-like 2; calcium-binding domain is found at 1230–1266 (DIDECSSLPCLNGGICRDQVGGFTCECSLGYSGQICE). Positions 1268–1304 (NINECISSPCLNKGTCTDGLASYRCTCVKGYMGVHCE) constitute an EGF-like 3; calcium-binding domain. Residues 1306-1342 (DVNECQSSPCLNNAVCKDQVGGFSCKCPPGFLGTRCE) form the EGF-like 4; calcium-binding domain. Residues 1344–1380 (NVDECLSQPCQNGATCKDGANSFRCQCPAGFTGTHCE) enclose the EGF-like 5; calcium-binding domain. The 37-residue stretch at 1382–1418 (NINECQSNPCRNQATCVDELNSYSCKCQPGFSGHRCE) folds into the EGF-like 6; calcium-binding domain. In terms of domain architecture, Pentraxin (PTX) spans 1423 to 1627 (SGFNLDFEVS…VKVDSSSMFC (205 aa)). 2 Sushi domains span residues 1628-1686 (SDCP…HCER) and 1687-1744 (IRCG…SCLD). Intrachain disulfides connect Cys1630-Cys1671, Cys1657-Cys1684, Cys1689-Cys1729, Cys1715-Cys1742, Cys1748-Cys1760, Cys1754-Cys1769, Cys1771-Cys1782, Cys1788-Cys1828, Cys1814-Cys1841, Cys1846-Cys1886, Cys1872-Cys1899, Cys1904-Cys1944, Cys1930-Cys1957, Cys1962-Cys2002, Cys1988-Cys2015, Cys2020-Cys2060, Cys2046-Cys2077, Cys2082-Cys2125, Cys2111-Cys2140, Cys2145-Cys2185, Cys2171-Cys2198, Cys2203-Cys2244, Cys2230-Cys2258, Cys2263-Cys2303, Cys2289-Cys2317, Cys2322-Cys2362, Cys2348-Cys2375, Cys2380-Cys2421, Cys2407-Cys2434, Cys2439-Cys2479, Cys2465-Cys2492, Cys2497-Cys2537, Cys2523-Cys2550, Cys2555-Cys2595, and Cys2581-Cys2607. The 40-residue stretch at 1744–1783 (DVDECAVGSDCSEHASCLNTNGSYVCSCNPPYTGDGKNCA) folds into the EGF-like 7; calcium-binding domain. 14 Sushi domains span residues 1780-1843 (KNCA…SCEA), 1844-1901 (ISCG…VCEL), 1902-1959 (VKCS…SCQL), 1960-2017 (VSCG…QCLA), 2018-2079 (VSCD…RCIA), 2080-2142 (HFCE…QCIP), 2143-2200 (VRCG…TCHP), 2201-2260 (VSCN…SCTP), 2261-2319 (LNCG…KCVP), 2320-2377 (TKCA…ICKM), 2378-2436 (VLCP…ECVP), 2437-2494 (VECP…MCKP), 2495-2552 (IECP…SCDA), and 2553-2609 (IHCS…TCVP). The segment at 2638-2645 (DMMEVPYL) is important for the interaction with integrin ITGA9:ITGB1. 14 consecutive Sushi domains span residues 2660–2711 (NTKE…SCIS), 2712–2769 (IECD…RCEA), 2770–2827 (ISCS…MCIP), 2828–2885 (VDCG…SCMP), 2886–2943 (VRCP…VCKP), 2944–3001 (ATCG…SCLP), 3002–3057 (CRCS…LCEH), 3058–3115 (AQCG…TCEP), 3116–3174 (LSCG…TCSP), 3175–3234 (KKCP…SCIP), 3235–3292 (VVCG…VCRE), 3293–3350 (NRCE…LCKP), 3351–3409 (NPCP…RCEK), and 3410–3466 (ISCG…VCRA). Disulfide bonds link Cys2682–Cys2709, Cys2714–Cys2754, Cys2740–Cys2767, Cys2772–Cys2812, Cys2798–Cys2825, Cys2830–Cys2870, Cys2856–Cys2883, Cys2888–Cys2928, Cys2914–Cys2941, Cys2946–Cys2986, Cys2972–Cys2999, Cys3004–Cys3043, Cys3029–Cys3055, Cys3060–Cys3100, Cys3086–Cys3113, Cys3118–Cys3159, Cys3144–Cys3172, Cys3177–Cys3217, Cys3203–Cys3232, Cys3237–Cys3277, Cys3263–Cys3290, Cys3295–Cys3335, Cys3321–Cys3348, Cys3353–Cys3394, Cys3380–Cys3407, Cys3412–Cys3452, Cys3438–Cys3464, Cys3500–Cys3510, Cys3504–Cys3516, Cys3518–Cys3527, Cys3532–Cys3542, Cys3536–Cys3548, and Cys3550–Cys3559. EGF-like domains are found at residues 3496-3528 (EEPI…SRCH) and 3529-3560 (TATC…HDCS).

As to quaternary structure, interacts (via Sushi domain 21) with ITGA9:ITGB1; thereby inhibits Ca(2+) intracellular signaling and as a result represses vasocontraction. Interacts (via Sushi domain 21) with ITGA4:ITGB1; thereby inhibits Ca(2+) intracellular signaling and as a result represses vasocontraction. Interacts with ANGPT1 and ANGPT2. Interacts with PEAR1 (via extracellular domain). Interacts with HSPG2, TLN1, FN1, COPA, CCT2, IQGAP1, LAMC1 and NID1. Interacts (via C-terminus) with TIE1. Expressed in the media layer of the arterial wall (at protein level). Highly expressed in lung and placenta, weakly expressed in the kidney, heart, brain and spleen. Also expressed in bone and periosteum, but not in cartilage and skeletal muscle.

It is found in the secreted. The protein resides in the nucleus. Its subcellular location is the cytoplasm. It localises to the membrane. Its function is as follows. Required for morphological development, cell alignment and migration of lymphatic endothelial cells during embryonic development, potentially via modulation of ANGPT2-TIE1 signaling and subsequent activation of FOXC2 transcription. Required for embryonic lymphatic vascular development, via mediating the correct formation of the first lymphovenous contact site and tight association of the lymphatic endothelium with the venous endothelium. Represses PRKCA-mediated L-type voltage-gated channel Ca(2+) influx and ROCK-mediated calcium sensitivity in vascular smooth muscle cells, via its interaction with integrins, thereby inhibiting vasocontraction. Promotes platelet activation, via its interaction with PEAR1 and subsequent activation of AKT/mTOR signaling. Plays a role in epidermal development and keratinocyte differentiation, independent of cell-cell adhesion. May play a role in initial cell attachment of stromal osteogenic cells. May promote myoblast cell adhesion when in the presence of integrin ITGA9:ITGB1. This Mus musculus (Mouse) protein is Sushi, von Willebrand factor type A, EGF and pentraxin domain-containing protein 1 (Svep1).